Here is an 82-residue protein sequence, read N- to C-terminus: Quinohemoprotein amine dehydrogenase subunit gamma (82 aa).

The 4-cysteinyl-glutamic acid (Cys-Glu) cross-link spans 7-16 (CTTSFDPGWE). 2 consecutive cross-links (3-cysteinyl-aspartic acid (Cys-Asp)) follow at residues 27–33 (CQPMEAD) and 41–49 (CWWPAQVAD). The active-site Proton acceptor is D33. Positions 37–43 (CADPCWW) form a cross-link, 4'-cysteinyl-tryptophylquinone (Cys-Trp). W43 bears the Tryptophylquinone mark.

This sequence belongs to the quinohemoprotein amine dehydrogenase subunit gamma family. Heterotrimer of an alpha, a beta and a gamma subunit. Cysteine tryptophylquinone residue serves as cofactor. Post-translationally, the cysteine tryptophylquinone (CTQ) is generated by oxidation of the indole ring of a tryptophan residue to form tryptophylquinone, followed by covalent cross-linking with a cysteine residue.

It localises to the periplasm. The catalysed reaction is 2 Fe(III)-[cytochrome c550] + an aliphatic amine + H2O = 2 Fe(II)-[cytochrome c550] + an aldehyde + NH4(+) + 2 H(+). Inhibited by carbonyl reagents such as hydrazine, hydroxylamine, phenylhydrazine and semicarbazide. Its function is as follows. Catalyzes the oxidative deamination of a wide range of primary aliphatic and aromatic amines. The physiological electron acceptor is the constitutive cytochrome c550. The protein is Quinohemoprotein amine dehydrogenase subunit gamma (qhnDH) of Paracoccus denitrificans.